We begin with the raw amino-acid sequence, 499 residues long: Lysine--tRNA ligase (499 aa).

Residues E408 and E415 each contribute to the Mg(2+) site.

This sequence belongs to the class-II aminoacyl-tRNA synthetase family. In terms of assembly, homodimer. Mg(2+) serves as cofactor.

It is found in the cytoplasm. The catalysed reaction is tRNA(Lys) + L-lysine + ATP = L-lysyl-tRNA(Lys) + AMP + diphosphate. The polypeptide is Lysine--tRNA ligase (Bacillus cytotoxicus (strain DSM 22905 / CIP 110041 / 391-98 / NVH 391-98)).